We begin with the raw amino-acid sequence, 485 residues long: NADH-quinone oxidoreductase subunit N (485 aa).

The next 14 membrane-spanning stretches (helical) occupy residues 8–28 (LIAL…MLSI), 35–55 (FVNA…LYFV), 75–95 (FYTG…YPWL), 105–125 (FYLL…ASHL), 127–147 (SLFI…GYAF), 159–179 (YTIL…LVYA), 203–223 (LLAG…LVPF), 235–255 (PAPV…GVLM), 271–291 (TVLG…AISQ), 297–317 (LLGY…IAVQ), 326–346 (VGVY…VVSL), 373–393 (AAVM…LGFI), 408–427 (WWLT…YYLR), and 449–469 (AFTA…VLGI).

It belongs to the complex I subunit 2 family. NDH-1 is composed of 13 different subunits. Subunits NuoA, H, J, K, L, M, N constitute the membrane sector of the complex.

Its subcellular location is the cell inner membrane. It catalyses the reaction a quinone + NADH + 5 H(+)(in) = a quinol + NAD(+) + 4 H(+)(out). NDH-1 shuttles electrons from NADH, via FMN and iron-sulfur (Fe-S) centers, to quinones in the respiratory chain. The immediate electron acceptor for the enzyme in this species is believed to be ubiquinone. Couples the redox reaction to proton translocation (for every two electrons transferred, four hydrogen ions are translocated across the cytoplasmic membrane), and thus conserves the redox energy in a proton gradient. The protein is NADH-quinone oxidoreductase subunit N of Erwinia tasmaniensis (strain DSM 17950 / CFBP 7177 / CIP 109463 / NCPPB 4357 / Et1/99).